A 181-amino-acid polypeptide reads, in one-letter code: Crossover junction endodeoxyribonuclease RuvC (181 aa).

Catalysis depends on residues aspartate 7, glutamate 67, and aspartate 139. The Mg(2+) site is built by aspartate 7, glutamate 67, and aspartate 139.

It belongs to the RuvC family. As to quaternary structure, homodimer which binds Holliday junction (HJ) DNA. The HJ becomes 2-fold symmetrical on binding to RuvC with unstacked arms; it has a different conformation from HJ DNA in complex with RuvA. In the full resolvosome a probable DNA-RuvA(4)-RuvB(12)-RuvC(2) complex forms which resolves the HJ. Requires Mg(2+) as cofactor.

It localises to the cytoplasm. The catalysed reaction is Endonucleolytic cleavage at a junction such as a reciprocal single-stranded crossover between two homologous DNA duplexes (Holliday junction).. Functionally, the RuvA-RuvB-RuvC complex processes Holliday junction (HJ) DNA during genetic recombination and DNA repair. Endonuclease that resolves HJ intermediates. Cleaves cruciform DNA by making single-stranded nicks across the HJ at symmetrical positions within the homologous arms, yielding a 5'-phosphate and a 3'-hydroxyl group; requires a central core of homology in the junction. The consensus cleavage sequence is 5'-(A/T)TT(C/G)-3'. Cleavage occurs on the 3'-side of the TT dinucleotide at the point of strand exchange. HJ branch migration catalyzed by RuvA-RuvB allows RuvC to scan DNA until it finds its consensus sequence, where it cleaves and resolves the cruciform DNA. In Bordetella avium (strain 197N), this protein is Crossover junction endodeoxyribonuclease RuvC.